A 402-amino-acid polypeptide reads, in one-letter code: Potassium channel subfamily K member 9 (402 aa).

Over 1 to 8 (MKRQNVRT) the chain is Cytoplasmic. Residues 9-29 (LSLIACTFTYLLVGAAVFDAL) form a helical membrane-spanning segment. Residues 30–88 (ESDHEMREEEKLKAEEVRLRGKYNISSDDYQQLELVILQSEPHRAGVQWKFAGSFYFAI) lie on the Extracellular side of the membrane. Residue Asn53 is glycosylated (N-linked (GlcNAc...) asparagine). The pore-forming intramembrane region spans 89–101 (TVITTIGYGHAAP). Thr93, Ile94, Gly95, and Tyr96 together coordinate K(+). A selectivity filter 1 region spans residues 93–98 (TIGYGH). Residues 102-107 (GTDAGK) are Extracellular-facing. A helical membrane pass occupies residues 108-128 (AFCMFYAVLGIPLTLVMFQSL). Topologically, residues 129 to 158 (GERMNTFVRYLLKRIKKCCGMRNTEVSMEN) are cytoplasmic. A helical transmembrane segment spans residues 159-179 (MVTVGFFSCMGTLCLGAAAFS). The Extracellular portion of the chain corresponds to 180–194 (QCEDWSFFHAYYYCF). An intramembrane region (pore-forming) is located at residues 195–207 (ITLTTIGFGDFVA). K(+) is bound by residues Thr199, Ile200, Gly201, and Phe202. Residues 199–204 (TIGFGD) form a selectivity filter 2 region. The Extracellular segment spans residues 208–218 (LQAKGALQRKP). A helical transmembrane segment spans residues 219–239 (FYVAFSFMYILVGLTVIGAFL). Topologically, residues 240 to 402 (NLVVLRFLTM…HRLHLRRKSI (163 aa)) are cytoplasmic. Residues 243–248 (VLRFLT) are X-gate.

It belongs to the two pore domain potassium channel (TC 1.A.1.8) family. As to quaternary structure, homodimer. Heterodimer with KCNK1. Heterodimer with KCNK3. Expressed in adrenal glands mainly in outer zona glomerulosa and inner zona medullaris. Expressed in retinal ganglion cells. Expressed in dentate gyrus (at protein level).

Its subcellular location is the cell membrane. The protein localises to the mitochondrion inner membrane. It localises to the cell projection. The protein resides in the dendrite. The enzyme catalyses K(+)(in) = K(+)(out). The catalysed reaction is Na(+)(in) = Na(+)(out). Its activity is regulated as follows. Inhibited by NTS:NTSR1 signaling in dentate gyrus granule cells. Functionally, k(+) channel that conducts voltage-dependent outward rectifying currents upon membrane depolarization. Voltage sensing is coupled to K(+) electrochemical gradient in an 'ion flux gating' mode where outward but not inward ion flow opens the gate. Changes ion selectivity and becomes permeable to Na(+) ions in response to extracellular acidification. Protonation of the pH sensor His-98 stabilizes C-type inactivation conformation likely converting the channel from outward K(+)-conducting, to inward Na(+)-conducting to nonconductive state. Homo- and heterodimerizes to form functional channels with distinct regulatory and gating properties. Allows K(+) currents with fast-gating kinetics important for the repolarization and hyperpolarization phases of action potentials. In granule neurons, hyperpolarizes the resting membrane potential to limit intrinsic neuronal excitability, but once the action potential threshold is reached, supports high-frequency action potential firing and increased neuronal excitability. Homomeric and/or heteromeric KCNK3:KCNK9 channels operate in cerebellar granule cells, whereas heteromeric KCNK1:KCNK9 enables currents in hippocampal dentate gyrus granule neurons. Dispensable for central chemosensory respiration i.e. breathing controlled by brainstem CO2/pH, it rather conducts pH-sensitive currents and controls the firing rate of serotonergic raphe neurons involved in potentiation of the respiratory chemoreflex. In retinal ganglion cells, mediates outward rectifying currents that regulate action potentials in response to acidification of the synaptic cleft. Involved in transmission of image-forming and nonimage-forming visual information in the retina. In adrenal gland, contributes to the maintenance of a hyperpolarized resting membrane potential of aldosterone-producing cells at zona glomerulosa and limits aldosterone release as part of a regulatory mechanism that controls arterial blood pressure and electrolyte homeostasis. The chain is Potassium channel subfamily K member 9 from Mus musculus (Mouse).